Reading from the N-terminus, the 367-residue chain is dTDP-4-amino-4,6-dideoxy-D-glucose transaminase (367 aa).

K184 bears the N6-(pyridoxal phosphate)lysine mark.

Belongs to the DegT/DnrJ/EryC1 family. Pyridoxal 5'-phosphate is required as a cofactor.

It carries out the reaction dTDP-4-amino-4,6-dideoxy-D-glucose + 2-oxoglutarate = dTDP-4-dehydro-6-deoxy-alpha-D-glucose + L-glutamate. The protein operates within bacterial outer membrane biogenesis; lipopolysaccharide biosynthesis. Catalyzes the conversion of dTDP-4-dehydro-6-deoxy-D-glucose (dTDP-D-Glc4O) to dTDP-4-amino-4,6-dideoxy-D-glucose (dTDP-D-Qui4N). L-glutamine can also be used as amino donor. The sequence is that of dTDP-4-amino-4,6-dideoxy-D-glucose transaminase (vioA) from Shigella dysenteriae.